The chain runs to 301 residues: Dimethylsulfoniopropionate lyase (301 aa).

Residues cysteine 111 and cysteine 230 each act as proton donor/acceptor in the active site.

It belongs to the aspartate/glutamate racemases family. ALMA1 subfamily. In terms of assembly, homotetramer.

The enzyme catalyses S,S-dimethyl-beta-propiothetin = acrylate + dimethyl sulfide + H(+). Mediates cleavage of dimethylsulfoniopropionate (DMSP) into dimethyl sulfide (DMS) and acrylate. DMS is the principal form by which sulfur is transported from oceans to the atmosphere and is a key component of the ocean sulfur cycle. The chain is Dimethylsulfoniopropionate lyase from Durusdinium sp. clade D (Symbiodinium sp. clade D).